The following is a 962-amino-acid chain: Oncostatin-M-specific receptor subunit beta (962 aa).

Residues 1-28 (MAFSVVLHQVTFLLAVLSLRTSQSKVLG) form the signal peptide. The Extracellular segment spans residues 29–738 (EPLQLTPEIH…VTTPDVRSHM (710 aa)). Residue Asn219 is glycosylated (N-linked (GlcNAc...) asparagine). 5 Fibronectin type-III domains span residues 237–332 (EPKN…VHPK), 333–426 (APHD…TPEA), 428–527 (PSEA…SGHE), 528–621 (EVHE…TQEL), and 623–734 (PSVN…TPDV). A disulfide bridge connects residues Cys243 and Cys253. A glycan (N-linked (GlcNAc...) asparagine) is linked at Asn324. A WSXWS motif motif is present at residues 413–417 (WSDWM). Asn492, Asn578, and Asn723 each carry an N-linked (GlcNAc...) asparagine glycan. A helical transmembrane segment spans residues 739-759 (LLQIILPMTLGVFLSIIVCYW). The Cytoplasmic segment spans residues 760–962 (KSQWVKEKCY…ASLKENNLTS (203 aa)). Positions 768–776 (CYPDIPNPY) match the Box 1 motif motif. Residues 818–840 (VGSGKLHTEDVPTKPPLVPTEKD) are disordered.

It belongs to the type I cytokine receptor family. Type 2 subfamily. Heterodimer composed of OSMR and IL6ST (type II OSM receptor). Heterodimer with IL31RA to form the IL31 receptor. As to expression, widely expressed. Expressed at high levels in the liver, skin and spleen. In the liver it is expressed exclusively in the oval cells.

The protein resides in the membrane. Associates with IL31RA to form the IL31 receptor. Binds IL31 and activates STAT1, STAT3 and STAT5. Capable of transducing OSM-specific signaling events. The OSM/OSM-R system is pivotal in the differentiation of oval cells into hepatocytes, thereby promoting liver regeneration. In Rattus norvegicus (Rat), this protein is Oncostatin-M-specific receptor subunit beta (Osmr).